A 354-amino-acid chain; its full sequence is Trans-L-3-hydroxyproline dehydratase (354 aa).

Cys-104 (proton acceptor) is an active-site residue. Substrate contacts are provided by residues 105–106, Asp-269, and 274–275; these read GH and GS.

It belongs to the proline racemase family. Homodimer.

The enzyme catalyses trans-3-hydroxy-L-proline = 1-pyrroline-2-carboxylate + H2O. Its function is as follows. Catalyzes the dehydration of trans-3-hydroxy-L-proline to delta-1-pyrroline-2-carboxylate (Pyr2C). The chain is Trans-L-3-hydroxyproline dehydratase (L3hypdh) from Mus musculus (Mouse).